Consider the following 381-residue polypeptide: Alkanesulfonate monooxygenase (381 aa).

This sequence belongs to the SsuD family. As to quaternary structure, homotetramer.

The enzyme catalyses an alkanesulfonate + FMNH2 + O2 = an aldehyde + FMN + sulfite + H2O + 2 H(+). Catalyzes the desulfonation of aliphatic sulfonates. The polypeptide is Alkanesulfonate monooxygenase (Escherichia coli O17:K52:H18 (strain UMN026 / ExPEC)).